A 220-amino-acid polypeptide reads, in one-letter code: Adenylate kinase (220 aa).

Position 10 to 15 (10 to 15) interacts with ATP; it reads GAGKGT. Positions 30-59 are NMP; sequence STGDMLRAAVKAGTPLGVEAKTYMDEGKLV. Residues Thr31, Arg36, 57–59, 85–88, and Gln92 each bind AMP; these read KLV and GFPR. The tract at residues 122-159 is LID; sequence GRRTHPASGRTYHVKFNPPKVEGKDDVTGEPLVQRDDD. ATP is bound by residues Arg123 and 132 to 133; that span reads TY. 2 residues coordinate AMP: Arg156 and Arg167. Gly206 contacts ATP.

This sequence belongs to the adenylate kinase family. As to quaternary structure, monomer.

Its subcellular location is the cytoplasm. It carries out the reaction AMP + ATP = 2 ADP. Its pathway is purine metabolism; AMP biosynthesis via salvage pathway; AMP from ADP: step 1/1. Functionally, catalyzes the reversible transfer of the terminal phosphate group between ATP and AMP. Plays an important role in cellular energy homeostasis and in adenine nucleotide metabolism. The protein is Adenylate kinase of Burkholderia mallei (strain NCTC 10247).